Consider the following 129-residue polypeptide: Large ribosomal subunit protein bL19 (129 aa).

This sequence belongs to the bacterial ribosomal protein bL19 family.

This protein is located at the 30S-50S ribosomal subunit interface and may play a role in the structure and function of the aminoacyl-tRNA binding site. The protein is Large ribosomal subunit protein bL19 of Burkholderia mallei (strain NCTC 10247).